The chain runs to 75 residues: Putative membrane protein insertion efficiency factor (75 aa).

Belongs to the UPF0161 family.

The protein localises to the cell membrane. Functionally, could be involved in insertion of integral membrane proteins into the membrane. In Halalkalibacterium halodurans (strain ATCC BAA-125 / DSM 18197 / FERM 7344 / JCM 9153 / C-125) (Bacillus halodurans), this protein is Putative membrane protein insertion efficiency factor.